A 239-amino-acid polypeptide reads, in one-letter code: Exosome complex component Rrp41 (239 aa).

The interval 1 to 21 (MEERPERLISEDGLRLDGRKP) is disordered.

The protein belongs to the RNase PH family. Rrp41 subfamily. As to quaternary structure, component of the archaeal exosome complex. Forms a hexameric ring-like arrangement composed of 3 Rrp41-Rrp42 heterodimers. The hexameric ring associates with a trimer of Rrp4 and/or Csl4 subunits.

The protein resides in the cytoplasm. Catalytic component of the exosome, which is a complex involved in RNA degradation. Has 3'-&gt;5' exoribonuclease activity. Can also synthesize heteromeric RNA-tails. The polypeptide is Exosome complex component Rrp41 (Methanopyrus kandleri (strain AV19 / DSM 6324 / JCM 9639 / NBRC 100938)).